Consider the following 381-residue polypeptide: Arginine biosynthesis bifunctional protein ArgJ (381 aa).

Substrate contacts are provided by Thr143, Lys165, Thr176, Glu255, Asn376, and Thr381. The Nucleophile role is filled by Thr176.

It belongs to the ArgJ family. In terms of assembly, heterotetramer of two alpha and two beta chains.

The protein resides in the cytoplasm. The enzyme catalyses N(2)-acetyl-L-ornithine + L-glutamate = N-acetyl-L-glutamate + L-ornithine. The catalysed reaction is L-glutamate + acetyl-CoA = N-acetyl-L-glutamate + CoA + H(+). It participates in amino-acid biosynthesis; L-arginine biosynthesis; L-ornithine and N-acetyl-L-glutamate from L-glutamate and N(2)-acetyl-L-ornithine (cyclic): step 1/1. It functions in the pathway amino-acid biosynthesis; L-arginine biosynthesis; N(2)-acetyl-L-ornithine from L-glutamate: step 1/4. Catalyzes two activities which are involved in the cyclic version of arginine biosynthesis: the synthesis of N-acetylglutamate from glutamate and acetyl-CoA as the acetyl donor, and of ornithine by transacetylation between N(2)-acetylornithine and glutamate. The chain is Arginine biosynthesis bifunctional protein ArgJ from Thermus thermophilus (strain ATCC BAA-163 / DSM 7039 / HB27).